The chain runs to 91 residues: Non-specific lipid-transfer protein 1 (91 aa).

Cystine bridges form between cysteine 3-cysteine 50, cysteine 13-cysteine 27, cysteine 28-cysteine 73, and cysteine 48-cysteine 87.

Belongs to the plant LTP family.

Plant non-specific lipid-transfer proteins transfer phospholipids as well as galactolipids across membranes. May play a role in wax or cutin deposition in the cell walls of expanding epidermal cells and certain secretory tissues. This chain is Non-specific lipid-transfer protein 1, found in Prunus domestica (Garden plum).